The chain runs to 92 residues: Small ribosomal subunit protein uS19c (92 aa).

Belongs to the universal ribosomal protein uS19 family.

It is found in the plastid. The protein localises to the chloroplast. In terms of biological role, protein S19 forms a complex with S13 that binds strongly to the 16S ribosomal RNA. The polypeptide is Small ribosomal subunit protein uS19c (Chlorokybus atmophyticus (Soil alga)).